The primary structure comprises 259 residues: Thiazole synthase (259 aa).

The active-site Schiff-base intermediate with DXP is Lys-95. Residues Gly-156, 182 to 183, and 204 to 205 contribute to the 1-deoxy-D-xylulose 5-phosphate site; these read AG and AS.

The protein belongs to the ThiG family. Homotetramer. Forms heterodimers with either ThiH or ThiS.

The protein resides in the cytoplasm. The catalysed reaction is [ThiS sulfur-carrier protein]-C-terminal-Gly-aminoethanethioate + 2-iminoacetate + 1-deoxy-D-xylulose 5-phosphate = [ThiS sulfur-carrier protein]-C-terminal Gly-Gly + 2-[(2R,5Z)-2-carboxy-4-methylthiazol-5(2H)-ylidene]ethyl phosphate + 2 H2O + H(+). Its pathway is cofactor biosynthesis; thiamine diphosphate biosynthesis. In terms of biological role, catalyzes the rearrangement of 1-deoxy-D-xylulose 5-phosphate (DXP) to produce the thiazole phosphate moiety of thiamine. Sulfur is provided by the thiocarboxylate moiety of the carrier protein ThiS. In vitro, sulfur can be provided by H(2)S. This is Thiazole synthase from Corynebacterium aurimucosum (strain ATCC 700975 / DSM 44827 / CIP 107346 / CN-1) (Corynebacterium nigricans).